The primary structure comprises 259 residues: Proteasome subunit alpha type-7 (259 aa).

It belongs to the peptidase T1A family. In terms of assembly, the 26S proteasome consists of a 20S proteasome core and two 19S regulatory subunits. The 20S proteasome core is composed of 28 subunits that are arranged in four stacked rings, resulting in a barrel-shaped structure. The two end rings are each formed by seven alpha subunits, and the two central rings are each formed by seven beta subunits. The catalytic chamber with the active sites is on the inside of the barrel.

The protein localises to the cytoplasm. It is found in the nucleus. Its function is as follows. The proteasome is a multicatalytic proteinase complex which is characterized by its ability to cleave peptides with Arg, Phe, Tyr, Leu, and Glu adjacent to the leaving group at neutral or slightly basic pH. The proteasome has an ATP-dependent proteolytic activity. This chain is Proteasome subunit alpha type-7 (PAD1), found in Solanum lycopersicum (Tomato).